Reading from the N-terminus, the 1162-residue chain is Lysine-specific demethylase 2A (1162 aa).

Ser-28 is modified (phosphoserine). Residues 148–316 (FSHTRLENMV…MQLKIYNIED (169 aa)) form the JmjC domain. Substrate is bound at residue Thr-209. 2 residues coordinate Fe cation: His-212 and Asp-214. Position 229 (Lys-229) interacts with substrate. His-284 serves as a coordination point for Fe cation. The disordered stretch occupies residues 367 to 389 (GLESGNGDEEAVDREPRRLSSRR). 2 positions are modified to phosphoserine: Ser-390 and Ser-394. Lys-505 is covalently cross-linked (Glycyl lysine isopeptide (Lys-Gly) (interchain with G-Cter in SUMO2)). The tract at residues 532–557 (VPTIPITKPHTMKPAPRLTPVRPAAA) is disordered. Residue Thr-550 is modified to Phosphothreonine. Ser-558 carries the post-translational modification Phosphoserine. The CXXC-type zinc-finger motif lies at 564–610 (ARRRRVRCRKCKACVQGECGVCHYCRDMKKFGGPGRMKQSCVLRQCL). Zn(2+) contacts are provided by Cys-571, Cys-574, Cys-577, Cys-582, Cys-585, Cys-588, Cys-604, Cys-609, Cys-620, and Cys-623. The segment at 617–678 (SVTCSLCGEV…CWECPKCYQE (62 aa)) adopts a PHD-type zinc-finger fold. Thr-632 bears the Phosphothreonine mark. Residues Cys-642, Cys-645, His-650, Cys-653, Cys-672, and Cys-675 each coordinate Zn(2+). Position 692 is a phosphoserine (Ser-692). The disordered stretch occupies residues 704-789 (PLRSCDEPLT…PSGKKELSEV (86 aa)). Thr-713 is subject to Phosphothreonine. Residues Ser-718 and Ser-731 each carry the phosphoserine modification. Composition is skewed to basic and acidic residues over residues 746 to 757 (SDHHSASRDERF) and 771 to 789 (TMVR…LSEV). Phosphoserine occurs at positions 825, 832, 869, and 883. Residues 839–887 (HCPARTPQRGDEEGLGGEEEEEEEEEEEDDSAEEGGAARLNGRGSWAQD) form a disordered region. A compositionally biased stretch (acidic residues) spans 851–871 (EGLGGEEEEEEEEEEEDDSAE). The F-box domain occupies 889–936 (DESWMQREVWMSVFRYLSRRELCECMRVCKTWYKWCCDKRLWTKIDLS). 2 LRR repeats span residues 961–982 (WTNI…LKDL) and 984–1010 (LAGC…DLRW). At Arg-1020 the chain carries ADP-ribosylarginine. LRR repeat units lie at residues 1048-1073 (GLDI…DLSH), 1074-1103 (CSHL…NMAG), 1104-1128 (CNKL…DLRG), and 1129-1156 (CKQI…SDEK).

This sequence belongs to the JHDM1 histone demethylase family. Interacts with CBX5/HP1A; the interaction promotes CBX5 localization to chromatin. The SKP1-KDM2A complex interacts with UBB. Part of a SCF (SKP1-cullin-F-box) protein ligase complex. The cofactor is Fe(2+). Post-translationally, mono-ADP-ribosylated at Arg-1020 in response to DNA damage, leading to displacement from chromatin, resulting in increased dimethylation of histone H3 at 'Lys-36'. As to expression, widely expressed, with highest levels in brain, testis and ovary, followed by lung.

It localises to the nucleus. The protein resides in the nucleoplasm. The protein localises to the chromosome. It carries out the reaction N(6),N(6)-dimethyl-L-lysyl(36)-[histone H3] + 2 2-oxoglutarate + 2 O2 = L-lysyl(36)-[histone H3] + 2 formaldehyde + 2 succinate + 2 CO2. Its function is as follows. Histone demethylase that specifically demethylates 'Lys-36' of histone H3, thereby playing a central role in histone code. Preferentially demethylates dimethylated H3 'Lys-36' residue while it has weak or no activity for mono- and tri-methylated H3 'Lys-36'. May also recognize and bind to some phosphorylated proteins and promote their ubiquitination and degradation. Required to maintain the heterochromatic state. Associates with centromeres and represses transcription of small non-coding RNAs that are encoded by the clusters of satellite repeats at the centromere. Required to sustain centromeric integrity and genomic stability, particularly during mitosis. Regulates circadian gene expression by repressing the transcriptional activator activity of CLOCK-BMAL1 heterodimer and RORA in a catalytically-independent manner. This chain is Lysine-specific demethylase 2A (KDM2A), found in Homo sapiens (Human).